A 167-amino-acid chain; its full sequence is uncharacterized protein (167 aa).

It localises to the mitochondrion. This is an uncharacterized protein from Marchantia polymorpha (Common liverwort).